A 292-amino-acid polypeptide reads, in one-letter code: Outer membrane protein assembly factor BamD (292 aa).

The signal sequence occupies residues 1–26 (MIQRPTFFTPTHLLAMLLATFVLITG). The N-palmitoyl cysteine moiety is linked to residue Cys-27. Cys-27 is lipidated: S-diacylglycerol cysteine.

The protein belongs to the BamD family. Part of the Bam complex.

It localises to the cell outer membrane. Functionally, part of the outer membrane protein assembly complex, which is involved in assembly and insertion of beta-barrel proteins into the outer membrane. In Xylella fastidiosa (strain 9a5c), this protein is Outer membrane protein assembly factor BamD.